Here is a 323-residue protein sequence, read N- to C-terminus: UPF0200/UPF0201 protein AF_1395 (323 aa).

The interval M1–L185 is UPF0200. G12 to S19 contacts ATP. Residues A186–L323 are UPF0201.

The protein in the N-terminal section; belongs to the UPF0200 family. In the C-terminal section; belongs to the UPF0201 family.

The sequence is that of UPF0200/UPF0201 protein AF_1395 from Archaeoglobus fulgidus (strain ATCC 49558 / DSM 4304 / JCM 9628 / NBRC 100126 / VC-16).